A 336-amino-acid polypeptide reads, in one-letter code: Ketol-acid reductoisomerase (NADP(+)) 1 (336 aa).

The KARI N-terminal Rossmann domain maps to 2 to 181; the sequence is AKVYYEKDVT…GATRAGVLET (180 aa). NADP(+) is bound by residues 25-28, Arg48, Ser52, and 82-85; these read YGSQ and DELQ. Residue His107 is part of the active site. Gly133 contributes to the NADP(+) binding site. Residues 182–327 form the KARI C-terminal knotted domain; it reads TFKEETETDL…RKLREMMPFV (146 aa). Residues Asp190, Glu194, Glu226, and Glu230 each contribute to the Mg(2+) site. Ser251 is a binding site for substrate.

This sequence belongs to the ketol-acid reductoisomerase family. It depends on Mg(2+) as a cofactor.

The catalysed reaction is (2R)-2,3-dihydroxy-3-methylbutanoate + NADP(+) = (2S)-2-acetolactate + NADPH + H(+). It catalyses the reaction (2R,3R)-2,3-dihydroxy-3-methylpentanoate + NADP(+) = (S)-2-ethyl-2-hydroxy-3-oxobutanoate + NADPH + H(+). It functions in the pathway amino-acid biosynthesis; L-isoleucine biosynthesis; L-isoleucine from 2-oxobutanoate: step 2/4. Its pathway is amino-acid biosynthesis; L-valine biosynthesis; L-valine from pyruvate: step 2/4. Involved in the biosynthesis of branched-chain amino acids (BCAA). Catalyzes an alkyl-migration followed by a ketol-acid reduction of (S)-2-acetolactate (S2AL) to yield (R)-2,3-dihydroxy-isovalerate. In the isomerase reaction, S2AL is rearranged via a Mg-dependent methyl migration to produce 3-hydroxy-3-methyl-2-ketobutyrate (HMKB). In the reductase reaction, this 2-ketoacid undergoes a metal-dependent reduction by NADPH to yield (R)-2,3-dihydroxy-isovalerate. This is Ketol-acid reductoisomerase (NADP(+)) 1 from Bacillus thuringiensis subsp. konkukian (strain 97-27).